The chain runs to 184 residues: Fruit protein pKIWI501 (184 aa).

A disordered region spans residues 1 to 184 (MATVEVTPAV…TEVPVDKTEE (184 aa)). Low complexity-rich tracts occupy residues 25 to 36 (PQEPQPEAAVAA) and 53 to 65 (PEAV…PAAT). The span at 72 to 92 (EVAEAEEEVVEEPQEVPEEPV) shows a compositional bias: acidic residues. Over residues 96-119 (AAKEVEATEGKAEPTGEMKDKTPE) the composition is skewed to basic and acidic residues. Positions 120-156 (ATDAPEAPAAAEEPTDAPEAPAVAEEPTNAPEAPAVG) are enriched in low complexity. Positions 159–168 (PEAKEGKPDE) are enriched in basic and acidic residues.

To H.brasiliensis latex allergen Hev b 5.

The chain is Fruit protein pKIWI501 from Actinidia deliciosa (Kiwi).